The primary structure comprises 469 residues: MNPNQKIITIGSICMVVGIISLILQIGNIVSIWISHSIQTGNQNHTGTCDQSIITYKNSTWVNQTYVNISNTNVVAGKDTTSVILAGNSSLCPIRGWAIYSKDNGVRIGSKGDVFVIREPFISCSHLECKTFFLTQGALLNDKHSNGTVKDRSPYRALMSCPVGEAPSPYNSRFESVAWSASACHDGMGWLTIGISGPDDGAVAVLKYNGIITETIKSWRKEILRTQESECVCVNGSCFTIMTDGPSGGPASYKIFKIEKGKVTKSIELDAPNSHYEECSCYPDTSKVMCVCRDNWHGSNRPWVSFDQNLDYQMGYICSGVFGDNPRPKDGKGSCGPVNVDGADGVKGFSYRYGNGGWIGRTKSNSSRKGFEMIWDPNGWTDPDSNFLVKQDIVAMTDWSGYSGSFVQHPELTGLDCMRPCFWVELIRGRPKENTIWTSGSSISFCGVNSDTVDWSWPDDAELPLNIDK.

Over 1 to 6 (MNPNQK) the chain is Intravirion. A helical membrane pass occupies residues 7–27 (IITIGSICMVVGIISLILQIG). The involved in apical transport and lipid raft association stretch occupies residues 11–33 (GSICMVVGIISLILQIGNIVSIW). Residues 28–469 (NIVSIWISHS…DAELPLNIDK (442 aa)) are Virion surface-facing. A hypervariable stalk region region spans residues 36–90 (HSIQTGNQNHTGTCDQSIITYKNSTWVNQTYVNISNTNVVAGKDTTSVILAGNSS). N-linked (GlcNAc...) asparagine; by host glycans are attached at residues asparagine 44, asparagine 58, asparagine 63, asparagine 68, and asparagine 88. A head of neuraminidase region spans residues 91 to 469 (LCPIRGWAIY…DAELPLNIDK (379 aa)). 8 cysteine pairs are disulfide-bonded: cysteine 92–cysteine 417, cysteine 124–cysteine 129, cysteine 184–cysteine 231, cysteine 233–cysteine 238, cysteine 279–cysteine 292, cysteine 281–cysteine 290, cysteine 318–cysteine 335, and cysteine 421–cysteine 446. Arginine 118 lines the substrate pocket. Residue asparagine 146 is glycosylated (N-linked (GlcNAc...) asparagine; by host). Aspartate 151 (proton donor/acceptor) is an active-site residue. Residue arginine 152 participates in substrate binding. Asparagine 235 is a glycosylation site (N-linked (GlcNAc...) asparagine; by host). 277 to 278 (EE) provides a ligand contact to substrate. Residue arginine 293 coordinates substrate. Aspartate 294, glycine 298, and aspartate 324 together coordinate Ca(2+). Asparagine 365 is a glycosylation site (N-linked (GlcNAc...) asparagine; by host). Position 368 (arginine 368) interacts with substrate. The active-site Nucleophile is the tyrosine 402.

The protein belongs to the glycosyl hydrolase 34 family. As to quaternary structure, homotetramer. Ca(2+) serves as cofactor. N-glycosylated.

Its subcellular location is the virion membrane. It is found in the host apical cell membrane. The catalysed reaction is Hydrolysis of alpha-(2-&gt;3)-, alpha-(2-&gt;6)-, alpha-(2-&gt;8)- glycosidic linkages of terminal sialic acid residues in oligosaccharides, glycoproteins, glycolipids, colominic acid and synthetic substrates.. With respect to regulation, inhibited by the neuraminidase inhibitors zanamivir (Relenza) and oseltamivir (Tamiflu). These drugs interfere with the release of progeny virus from infected cells and are effective against all influenza strains. Resistance to neuraminidase inhibitors is quite rare. Its function is as follows. Catalyzes the removal of terminal sialic acid residues from viral and cellular glycoconjugates. Cleaves off the terminal sialic acids on the glycosylated HA during virus budding to facilitate virus release. Additionally helps virus spread through the circulation by further removing sialic acids from the cell surface. These cleavages prevent self-aggregation and ensure the efficient spread of the progeny virus from cell to cell. Otherwise, infection would be limited to one round of replication. Described as a receptor-destroying enzyme because it cleaves a terminal sialic acid from the cellular receptors. May facilitate viral invasion of the upper airways by cleaving the sialic acid moieties on the mucin of the airway epithelial cells. Likely to plays a role in the budding process through its association with lipid rafts during intracellular transport. May additionally display a raft-association independent effect on budding. Plays a role in the determination of host range restriction on replication and virulence. Sialidase activity in late endosome/lysosome traffic seems to enhance virus replication. This Influenza A virus (strain A/Fort Monmouth/1/1947 H1N1) protein is Neuraminidase.